We begin with the raw amino-acid sequence, 448 residues long: Serine--tRNA ligase (448 aa).

246 to 248 (TAE) contacts L-serine. Residues 277 to 279 (RKE) and Val-293 contribute to the ATP site. Glu-300 contributes to the L-serine binding site. 364–367 (ELAS) is a binding site for ATP. Thr-399 contributes to the L-serine binding site.

Belongs to the class-II aminoacyl-tRNA synthetase family. Type-1 seryl-tRNA synthetase subfamily. As to quaternary structure, homodimer. The tRNA molecule binds across the dimer.

It localises to the cytoplasm. The enzyme catalyses tRNA(Ser) + L-serine + ATP = L-seryl-tRNA(Ser) + AMP + diphosphate + H(+). It carries out the reaction tRNA(Sec) + L-serine + ATP = L-seryl-tRNA(Sec) + AMP + diphosphate + H(+). The protein operates within aminoacyl-tRNA biosynthesis; selenocysteinyl-tRNA(Sec) biosynthesis; L-seryl-tRNA(Sec) from L-serine and tRNA(Sec): step 1/1. In terms of biological role, catalyzes the attachment of serine to tRNA(Ser). Is also able to aminoacylate tRNA(Sec) with serine, to form the misacylated tRNA L-seryl-tRNA(Sec), which will be further converted into selenocysteinyl-tRNA(Sec). This is Serine--tRNA ligase from Pyrobaculum islandicum (strain DSM 4184 / JCM 9189 / GEO3).